Reading from the N-terminus, the 1888-residue chain is MNSFLLLDHVSDSQDSGSEWSNTHGSLISQRGNEYDGITPATKEKNQNKLEILNNETTIGSTKSSVSSLPELNRNVSFEKSDQNLAETKREEENKRTEVFKKDAEHEAVVVKRDFRPRRPEQTRPYTYDFLRHQIEFKRIGLVPITVPHGFSSDRSITSKSSHKPVNVIVRNRASSRKPPLTSTHRFRRYGAVISDSDDDESNTEQDHSKESNLNTADNDLALSSTIEGKKTSTSKEALESESLLSDSDQSMTNISSNSTVSDLNLKTLKKRLRGVLPPSFLTLQEKKKLENRGVKKKTSLHKSVIEGEKIKGVARRKLHPRSTAKLSSELGNEISDSDNSISTPTPTDDSRFDTSEFLDSISRDNGWLKEDVVDQLWLPKRSLSALKKSSSLTSENPFQLNVAANAVSTIPVYRTTKTKMKKNRFKYVEVEKLPDLILESYGKKAPKFLRVFARSSSHIPKMIRRKRQMDSKKYFSFDKESDRQVIDQVLSDWYSGKHELVQQSHSYKKPSDSKSVGGNIFSVNSKKHSVNINAKTAANNGLSHLQNFSEELLKKRKLFSSLFSNNVSYKKSKKLKRTHTVHDKCQKVAKLDHYIRDNIELNSKEREHDCYEGTLAVPQVNTEIRKSSRKQKAQRFIRDDFDTVFFQSSSNPNYFTDVNPFWNIGIWSTTFNVITFRPGLSLPNNSFIKTQGLNSILQLDIVTHPFKSVYAFSCLFNIQDDVFKTFEKLKDTFETVLENLPYFTNSETVDLYNLLSFCSAFILHSQVSMGLVNLASSFLETYALVNDRVSSISGLNRSQLVEKIAVLFQTFQVVFYCEFELGNQQNINKVSWLASDLISKLLSAGQSGLLECYRNLRIQASDTTVIDTLFLESWSILNHILFHVYKKKYALWEQVNSFFDLQKKELSILEMEKIWYVIMTLNPVFQIGLNGTTHSPGNNSFWPLIIRVSESAFKMHKDGHNVKVVERYLRTVFLRIHFLISEWRWEDVAQILFLIFDFFSHRKFNDLSSEISEDTPTDFPDFVKSLDRPPNLHVTALDTCFVIYLKVILISISRLRQVDENTNSIKRIVSRLQPLHSRQYTRESPFSIKDFMSLEHTHTLLICLYWAAPENCRPSLNRIRDIVIVDNSHLKARLISLKAWLHLMKYVIKEGTDYELAQGMEWFNSILKVTFDEYLALFSNGTSVGEMQLAEYSKHQLENALIVAFHSLQDLIPNSSVYISRINVLVTEQSCRRILKDSHFFPPRVTLECILFLKKFLQYQSNTEPPKVTVVGSTSHDSQDAYFDSDVLDDNTLILEQEKFERKYEVAQILRTFVSPFLYQTISYLVGNDEDKENYIRILLLPLMECMAICASFAVEAKINDWSYYIDFGSESWERIRNTPLKRSLSTTFYSFLISYNDSFIKKHEEKVLTVWFESLGALDEDHAAQFTILLLQKNLKNPILLNLPISVKIEEISINYFKSVHLNLLTAVFCNMAKLYADAKTNGFASSQYLQSLFIHYLSSLLSSMQHSYETNGHSSDTHSLFVINSQRVVGDILQYCSQFANDRNLPALRYFMDSTKFPQPPERLEYTALRLRSYARKTLTNSASQNALFSFLKANFDVALLEQKQTETSNLLRLAMGFHNQNSSSKWDVEISSLRKFCVKELLLSYLGEGSLAAMFYSLLLLEGLSRTYNSFRRIYLQPYIQQLLCEEISVFVADLEKYALLYENKRPLLSGRIYYLISSFVAISMTNKTSGLPSSLICNLQNFLARIARDFLLELCWNIEGSEFPPPYNTVDCRSKFVKTIQQHCSADWYDNVTNIVHKSRKKKLVLPSQVEQEEEYWSGLMEVTIQIWKHDKGFLEPELDRFLNVICSYAPDMSGLPTKIKCFLDKIGYSWMTEENDFDIVLF.

Disordered stretches follow at residues 12–34 (DSQD…RGNE), 151–258 (FSSD…ISSN), and 316–354 (RRKL…SRFD). Polar residues-rich tracts occupy residues 13–32 (SQDS…SQRG), 212–227 (SNLN…SSTI), and 338–348 (SDNSISTPTPT).

The protein belongs to the MMS22 family.

It localises to the nucleus. In terms of biological role, involved in protection against replication-dependent DNA damage. May act by restoring active replication forks, repairing unusual DNA structures, and/or preventing aberrant DNA rearrangement at arrested replication forks. The sequence is that of Protein mms22 (mus7) from Schizosaccharomyces pombe (strain 972 / ATCC 24843) (Fission yeast).